A 583-amino-acid chain; its full sequence is Threonine--tRNA ligase (583 aa).

The tract at residues 185-478 (DHRKLGRELD…LVEHYGGAFP (294 aa)) is catalytic. Residues Cys-278, His-329, and His-455 each coordinate Zn(2+).

It belongs to the class-II aminoacyl-tRNA synthetase family. Homodimer. It depends on Zn(2+) as a cofactor.

Its subcellular location is the cytoplasm. It carries out the reaction tRNA(Thr) + L-threonine + ATP = L-threonyl-tRNA(Thr) + AMP + diphosphate + H(+). Its function is as follows. Catalyzes the attachment of threonine to tRNA(Thr) in a two-step reaction: L-threonine is first activated by ATP to form Thr-AMP and then transferred to the acceptor end of tRNA(Thr). Also edits incorrectly charged L-seryl-tRNA(Thr). The polypeptide is Threonine--tRNA ligase (Borrelia hermsii (strain HS1 / DAH)).